The primary structure comprises 447 residues: N-succinylarginine dihydrolase (447 aa).

Residues 19 to 28, Asn-110, and 137 to 138 contribute to the substrate site; these read AGLSFGNKAS and HR. The active site involves Glu-174. Position 212 (Arg-212) interacts with substrate. Residue His-248 is part of the active site. The substrate site is built by Asp-250 and Asn-359. Cys-365 serves as the catalytic Nucleophile.

Belongs to the succinylarginine dihydrolase family. As to quaternary structure, homodimer.

The enzyme catalyses N(2)-succinyl-L-arginine + 2 H2O + 2 H(+) = N(2)-succinyl-L-ornithine + 2 NH4(+) + CO2. It participates in amino-acid degradation; L-arginine degradation via AST pathway; L-glutamate and succinate from L-arginine: step 2/5. Its function is as follows. Catalyzes the hydrolysis of N(2)-succinylarginine into N(2)-succinylornithine, ammonia and CO(2). In Escherichia coli O157:H7, this protein is N-succinylarginine dihydrolase.